We begin with the raw amino-acid sequence, 978 residues long: Mast/stem cell growth factor receptor Kit (978 aa).

The first 25 residues, 1 to 25 (MRGARGAWDFLFVLLLLLLVQTGSS), serve as a signal peptide directing secretion. Residues 26–525 (QPSVSPGELS…QIHAHTLFTP (500 aa)) lie on the Extracellular side of the membrane. 5 consecutive Ig-like C2-type domains span residues 27–112 (PSVS…VFVR), 121–205 (DLPL…LKVR), 212–309 (PVVS…LEVV), 318–411 (PMMN…VNVN), and 414–508 (PEIL…FNFA). Residues cysteine 58 and cysteine 97 are joined by a disulfide bond. 3 N-linked (GlcNAc...) asparagine glycosylation sites follow: asparagine 94, asparagine 130, and asparagine 145. Disulfide bonds link cysteine 136/cysteine 186, cysteine 151/cysteine 183, and cysteine 233/cysteine 291. N-linked (GlcNAc...) asparagine glycans are attached at residues asparagine 284, asparagine 294, asparagine 301, asparagine 321, asparagine 353, asparagine 368, asparagine 401, asparagine 464, and asparagine 487. A disulfide bridge links cysteine 429 with cysteine 492. A helical transmembrane segment spans residues 526 to 546 (LLIGFVIAAGLMCIFVMILTY). At 547 to 978 (KYLQKPMYEV…TQPLLVHEDV (432 aa)) the chain is on the cytoplasmic side. Phosphotyrosine is present on residues tyrosine 548 and tyrosine 554. Tyrosine 569 provides a ligand contact to Mg(2+). 2 positions are modified to phosphotyrosine; by autocatalysis: tyrosine 569 and tyrosine 571. The important for interaction with phosphotyrosine-binding proteins stretch occupies residues 569-571 (YVY). The Protein kinase domain maps to 590–939 (LSFGKTLGAG…ISESTNHIYS (350 aa)). Residues 597 to 604 (GAGAFGKV), lysine 624, and 672 to 678 (EYCCYGD) contribute to the ATP site. Phosphotyrosine; by autocatalysis occurs at positions 704 and 722. Tyrosine 731 bears the Phosphotyrosine mark. Residues serine 743 and serine 748 each carry the phosphoserine; by PKC/PRKCA modification. Aspartate 794 (proton acceptor) is an active-site residue. ATP is bound at residue arginine 798. 2 residues coordinate Mg(2+): asparagine 799 and aspartate 812. Phosphoserine is present on serine 823. Tyrosine 825 carries the post-translational modification Phosphotyrosine; by autocatalysis. Serine 893 carries the phosphoserine modification. Tyrosine 902 is subject to Phosphotyrosine. Tyrosine 938 carries the phosphotyrosine; by autocatalysis modification. Serine 961 carries the phosphoserine modification.

The protein belongs to the protein kinase superfamily. Tyr protein kinase family. CSF-1/PDGF receptor subfamily. In terms of assembly, monomer in the absence of bound KITLG/SCF. Homodimer in the presence of bound KITLG/SCF, forming a heterotetramer with two KITLG/SCF molecules. Interacts (via phosphorylated tyrosine residues) with the adapter proteins GRB2 and GRB7 (via SH2 domain), and SH2B2/APS. Interacts (via C-terminus) with MPDZ (via the tenth PDZ domain). Interacts (via phosphorylated tyrosine residues) with PIK3R1 and PIK3CD. Interacts (via phosphorylated tyrosine) with CRK (isoform Crk-II), FYN, SHC1 and MATK/CHK (via SH2 domain). Interacts with LYN and FES/FPS. Interacts (via phosphorylated tyrosine residues) with the protein phosphatases PTPN6/SHP-1 (via SH2 domain), PTPN11/SHP-2 (via SH2 domain) and PTPRU. Interacts with PLCG1. Interacts with DOK1 and TEC. Interacts with IL1RAP (independent of stimulation with KITLG/SCF). A mast cell-specific KITLG/SCF-induced interleukin-33 signaling complex contains IL1RL1, IL1RAP, KIT and MYD88. Post-translationally, ubiquitinated by SOCS6. KIT is rapidly ubiquitinated after autophosphorylation induced by KITLG/SCF binding, leading to internalization and degradation. Autophosphorylated on tyrosine residues. KITLG/SCF binding promotes autophosphorylation. Phosphorylated tyrosine residues are important for interaction with specific binding partners.

The protein localises to the cell membrane. It carries out the reaction L-tyrosyl-[protein] + ATP = O-phospho-L-tyrosyl-[protein] + ADP + H(+). With respect to regulation, present in an inactive conformation in the absence of bound ligand. KITLG/SCF binding leads to dimerization and activation by autophosphorylation on tyrosine residues. Activity is down-regulated by PRKCA-mediated phosphorylation on serine residues. In terms of biological role, tyrosine-protein kinase that acts as a cell-surface receptor for the cytokine KITLG/SCF and plays an essential role in the regulation of cell survival and proliferation, hematopoiesis, stem cell maintenance, gametogenesis, mast cell development, migration and function, and in melanogenesis. In response to KITLG/SCF binding, KIT can activate several signaling pathways. Phosphorylates PIK3R1, PLCG1, SH2B2/APS and CBL. Activates the AKT1 signaling pathway by phosphorylation of PIK3R1, the regulatory subunit of phosphatidylinositol 3-kinase. Activated KIT also transmits signals via GRB2 and activation of RAS, RAF1 and the MAP kinases MAPK1/ERK2 and/or MAPK3/ERK1. Promotes activation of STAT family members STAT1, STAT3, STAT5A and STAT5B. Activation of PLCG1 leads to the production of the cellular signaling molecules diacylglycerol and inositol 1,4,5-trisphosphate. KIT signaling is modulated by protein phosphatases, and by rapid internalization and degradation of the receptor. Activated KIT promotes phosphorylation of the protein phosphatases PTPN6/SHP-1 and PTPRU, and of the transcription factors STAT1, STAT3, STAT5A and STAT5B. Promotes phosphorylation of PIK3R1, CBL, CRK (isoform Crk-II), LYN, MAPK1/ERK2 and/or MAPK3/ERK1, PLCG1, SRC and SHC1. In Capra hircus (Goat), this protein is Mast/stem cell growth factor receptor Kit (KIT).